We begin with the raw amino-acid sequence, 79 residues long: MSDIEARVKKIIAEQLGVEESQVTNEKAFVADLGADSLDTVELVMALEDEFGIEIPDEDAEKITTVQNAIDYANTHQKA.

Positions 2-77 constitute a Carrier domain; that stretch reads SDIEARVKKI…NAIDYANTHQ (76 aa). Serine 37 is modified (O-(pantetheine 4'-phosphoryl)serine).

Belongs to the acyl carrier protein (ACP) family. In terms of processing, 4'-phosphopantetheine is transferred from CoA to a specific serine of apo-ACP by AcpS. This modification is essential for activity because fatty acids are bound in thioester linkage to the sulfhydryl of the prosthetic group.

It is found in the cytoplasm. Its pathway is lipid metabolism; fatty acid biosynthesis. Its function is as follows. Carrier of the growing fatty acid chain in fatty acid biosynthesis. The chain is Acyl carrier protein from Paracidovorax citrulli (strain AAC00-1) (Acidovorax citrulli).